Reading from the N-terminus, the 232-residue chain is Probable phospholipid hydroperoxide glutathione peroxidase 6, mitochondrial (232 aa).

A mitochondrion-targeting transit peptide spans 1 to 54 (MLRSSIRLLYIRRTSPLLRSLSSSSSSSSSKRFDSAKPLFNSHRIISLPISTTG). C105 is an active-site residue.

This sequence belongs to the glutathione peroxidase family. Expressed at a low but detectable level in leaves, stems, and flowers, but at a higher level in siliques and even higher in roots. Predominantly expressed in seeds.

Its subcellular location is the mitochondrion. The enzyme catalyses a hydroperoxy polyunsaturated fatty acid + 2 glutathione = a hydroxy polyunsaturated fatty acid + glutathione disulfide + H2O. In terms of biological role, protects cells and enzymes from oxidative damage, by catalyzing the reduction of hydrogen peroxide, lipid peroxides and organic hydroperoxide, by glutathione. This Arabidopsis thaliana (Mouse-ear cress) protein is Probable phospholipid hydroperoxide glutathione peroxidase 6, mitochondrial (GPX6).